Consider the following 118-residue polypeptide: HTH-type transcriptional regulator SarT (118 aa).

Positions 55-78 form a DNA-binding region, H-T-H motif; it reads MRDIISYIGIDQSRIVKSVKELSK.

Belongs to the SarA family.

It localises to the cytoplasm. Its function is as follows. Transcriptional regulator acting as an intermediary between major regulators SarA and agr and virulence genes. Represses alpha-hemolysin (hla) gene expression. The polypeptide is HTH-type transcriptional regulator SarT (sarT) (Staphylococcus aureus (strain Mu50 / ATCC 700699)).